The primary structure comprises 504 residues: ATP synthase subunit alpha, chloroplastic (504 aa).

Gly170–Thr177 is an ATP binding site. A Phosphothreonine modification is found at Thr257.

The protein belongs to the ATPase alpha/beta chains family. In terms of assembly, F-type ATPases have 2 components, CF(1) - the catalytic core - and CF(0) - the membrane proton channel. CF(1) has five subunits: alpha(3), beta(3), gamma(1), delta(1), epsilon(1). CF(0) has four main subunits: a, b, b' and c.

The protein localises to the plastid. It is found in the chloroplast thylakoid membrane. The catalysed reaction is ATP + H2O + 4 H(+)(in) = ADP + phosphate + 5 H(+)(out). Its function is as follows. Produces ATP from ADP in the presence of a proton gradient across the membrane. The alpha chain is a regulatory subunit. The protein is ATP synthase subunit alpha, chloroplastic of Nasturtium officinale (Watercress).